Reading from the N-terminus, the 400-residue chain is MSKKSLASLSSADISGKRALVRVDFNVPVDDQGKITDDTRIRAALPTIQDLTQKGAKVILASHFGRPKGVDDKLRLTPVAKRLSELLGQEVIKTDDSIGDEVAAKVAALQNGQVLLLENVRFYPEEEKNDAEFAKKLAANADFYVNDAFGTAHRAHASTEGVTKFLSPSVAGYLVEKELQYLQNAIENPQRPLAAIIGGSKVSSKIGVIETLLEKCDKLIIGGGMIFTFYKARGLSVGKSLVEEDKLELAKSLEAKAKERGVALLLPTDVVLADNFAPDANSQTVSIENIPDGWMGLDIGPDSVKFFQEALADTKTVIWNGPMGVFEFDKFAAGTEAIAHTLAEIGKTGTTTIIGGGDSVAAVEKVGLADQMSHISTGGGASLELLEGKVLPGIAALDDA.

Substrate contacts are provided by residues 24-26 (DFN), R40, 63-66 (HFGR), R121, and R154. ATP is bound by residues K205, G296, E327, and 356–359 (GGDS).

Belongs to the phosphoglycerate kinase family. In terms of assembly, monomer.

The protein localises to the cytoplasm. The enzyme catalyses (2R)-3-phosphoglycerate + ATP = (2R)-3-phospho-glyceroyl phosphate + ADP. It participates in carbohydrate degradation; glycolysis; pyruvate from D-glyceraldehyde 3-phosphate: step 2/5. The protein is Phosphoglycerate kinase of Nostoc punctiforme (strain ATCC 29133 / PCC 73102).